Consider the following 301-residue polypeptide: MSYFGLETFNENQSEENLDEESVILTLVPFKEEEEPNTDYATQSNVSSSTLDHTPPARSLVRHAGIKHPTRTIPSTCPPPSLPPIRDVSRNTLREWCRYHNLSTDGKKVEVYLRLRRHSYSKQECYIPNTSREARMKQGPKKSKIVFRGIGPPSGCQRKKEESGVLEILTSPKESTFAAWARIAMRAAQSMSKNRCPLPSNVEAFLPQATGSRWCVVHGRQLPADKKGWVRLQFLAGQTWVPDTPQRMNFLFLLPACIIPEPGVEDNLLCPECVHSNKKILRNFKIRSRAKKNALPPNMPP.

Residues 31–85 (KEEEEPNTDYATQSNVSSSTLDHTPPARSLVRHAGIKHPTRTIPSTCPPPSLPPI) form a disordered region. A compositionally biased stretch (polar residues) spans 39–52 (DYATQSNVSSSTLD). Residues 60-70 (LVRHAGIKHPT) are compositionally biased toward basic residues. Residues 85 to 119 (IRDVSRNTLREWCRYHNLSTDGKKVEVYLRLRRHS) enclose the SAP domain.

Interacts with DPPA4. As to expression, not detected in adult tissues.

It localises to the nucleus. In terms of biological role, binds to target gene promoters, including NKX2-5 and SYCE1, but not GATA4, and may be involved in the maintenance of the active epigenetic status of these genes. The sequence is that of Developmental pluripotency-associated protein 2 (Dppa2) from Mus musculus (Mouse).